The chain runs to 340 residues: MSVTIALDAMGGDHGPQVVVPAALKVLAEMINVKLILIGDRDLLNGLVAIHRGELGTRLTIQHASQKVEMDEAPSQALRAKKDSSMRIAINLVKSRKADACVSAGNTGALMAIARFVLKTLPGIDRPAIVSALPTIRGHCYMLDLGANVDSSAQNLYQFALMGSVLASAIDNIKEPSVGLLNIGSEIIKGNERIKEAGRMLSQSHLNYVGFVEGNDVYEGCVDVVVCDGFVGNVALKSSEGVARMVRHYLRESFQRNYLTRFAGFLALPVLKAFHQRMDPRRYNGANLLGLNGVVIKSHGGADITAFAHAIRIAVIEARKDVPQHISAHLEPWLSEGQVV.

The protein belongs to the PlsX family. Homodimer. Probably interacts with PlsY.

It is found in the cytoplasm. It catalyses the reaction a fatty acyl-[ACP] + phosphate = an acyl phosphate + holo-[ACP]. The protein operates within lipid metabolism; phospholipid metabolism. Functionally, catalyzes the reversible formation of acyl-phosphate (acyl-PO(4)) from acyl-[acyl-carrier-protein] (acyl-ACP). This enzyme utilizes acyl-ACP as fatty acyl donor, but not acyl-CoA. The sequence is that of Phosphate acyltransferase from Nitrosococcus oceani (strain ATCC 19707 / BCRC 17464 / JCM 30415 / NCIMB 11848 / C-107).